We begin with the raw amino-acid sequence, 351 residues long: Protein-glutamate methylesterase/protein-glutamine glutaminase 1 (351 aa).

A Response regulatory domain is found at 1 to 115 (MVDDSAVVRQ…KQFLTESADE (115 aa)). Position 49 is a 4-aspartylphosphate (Asp49). The CheB-type methylesterase domain maps to 161–351 (AQTTERIVAI…MAREIVTQLQ (191 aa)). Active-site residues include Ser173, His199, and Asp295.

The protein belongs to the CheB family. In terms of processing, phosphorylated by CheA. Phosphorylation of the N-terminal regulatory domain activates the methylesterase activity.

The protein resides in the cytoplasm. It carries out the reaction [protein]-L-glutamate 5-O-methyl ester + H2O = L-glutamyl-[protein] + methanol + H(+). The catalysed reaction is L-glutaminyl-[protein] + H2O = L-glutamyl-[protein] + NH4(+). Functionally, involved in chemotaxis. Part of a chemotaxis signal transduction system that modulates chemotaxis in response to various stimuli. Catalyzes the demethylation of specific methylglutamate residues introduced into the chemoreceptors (methyl-accepting chemotaxis proteins or MCP) by CheR. Also mediates the irreversible deamidation of specific glutamine residues to glutamic acid. The polypeptide is Protein-glutamate methylesterase/protein-glutamine glutaminase 1 (Xanthomonas oryzae pv. oryzae (strain MAFF 311018)).